Reading from the N-terminus, the 255-residue chain is MSDYIVVKCGGSMLDQLNDVFFDCIKKLQQKYKVVIVHGGGPEIDAKLKDCNIKVEKRDGLRVTPREVMDIVQMVLCGSTNKKLVMNLQKHNLLAVGCSGCDGNLLQVQPVSKEIGYVGEVSYVETALLKGLINMNYIPVIAPIGINENEIYNINADNAAAGIAAALSAKELIFITDVDGILHEGKLVKKTDEFEIDTFIEKGVITGGMIPKVQAALASLKMGVQKVSVVNGTKDFAEVTGECIGTTVTKGVNIV.

Substrate-binding positions include 40–41 (GG), Arg-62, and Asn-153.

Belongs to the acetylglutamate kinase family. ArgB subfamily.

The protein resides in the cytoplasm. It catalyses the reaction N-acetyl-L-glutamate + ATP = N-acetyl-L-glutamyl 5-phosphate + ADP. The protein operates within amino-acid biosynthesis; L-arginine biosynthesis; N(2)-acetyl-L-ornithine from L-glutamate: step 2/4. Functionally, catalyzes the ATP-dependent phosphorylation of N-acetyl-L-glutamate. The polypeptide is Acetylglutamate kinase (Bacillus mycoides (strain KBAB4) (Bacillus weihenstephanensis)).